The following is an 808-amino-acid chain: PH domain-containing protein DDB_G0275795 (808 aa).

Positions 57 to 121 form a coiled coil; it reads ENLEILKEIK…RNRQASQQEL (65 aa). Polar residues predominate over residues 108–120; sequence ESTTRNRQASQQE. Disordered stretches follow at residues 108-127, 228-325, 339-375, 405-475, 523-542, and 645-675; these read ESTTRNRQASQQELPKPPIL, GANA…QDEE, EKLKQQDDQQQDDKQQQQQQSQEPPQQQQQQQEQLQS, QQQQ…NGSN, DQTKTDAEEKQNKSSNELKK, and KGGGSGIHTNSNNNNNSNNNNNNSNNNSNTD. In terms of domain architecture, PH spans 124–216; it reads PPILSGYLKK…WTEGLKEFKK (93 aa). The span at 228–248 shows a compositional bias: low complexity; it reads GANANGNGNSSPNMSSSGSYS. A compositionally biased stretch (polar residues) spans 255–274; sequence ESSQQPLNSSTGAINTTPQR. A compositionally biased stretch (low complexity) spans 293-321; sequence SHSSSSTAPDSPTLSSSYVPPPSSSNLNP. Residues 322–412 are a coiled coil; it reads QDEELKRREN…QQQQQQQQQQ (91 aa). Residues 339–353 show a composition bias toward basic and acidic residues; sequence EKLKQQDDQQQDDKQ. Low complexity-rich tracts occupy residues 354–375 and 405–414; these read QQQQQSQEPPQQQQQQQEQLQS and QQQQQQQQPP. Polar residues predominate over residues 417-428; it reads SPQNSRHGSTNY. The segment covering 429 to 449 has biased composition (low complexity); the sequence is SQLQQQQQQPQQQPQQQSSPQ. Residues 450–475 show a composition bias toward polar residues; the sequence is VIISNNNSPRFESQQQQNNFHNNGSN. A coiled-coil region spans residues 487–645; sequence DELNKKFLKE…DKYINELLEK (159 aa). The segment covering 525–542 has biased composition (basic and acidic residues); the sequence is TKTDAEEKQNKSSNELKK. A compositionally biased stretch (low complexity) spans 654-673; sequence NSNNNNNSNNNNNNSNNNSN. A coiled-coil region spans residues 678–734; that stretch reads KESMVAHQTQNAFLLQEIQRLETQSQFKLDIKIQQIEELENQLEQQLYQFHRFREAI.

This chain is PH domain-containing protein DDB_G0275795, found in Dictyostelium discoideum (Social amoeba).